A 164-amino-acid chain; its full sequence is Peptidyl-prolyl cis-trans isomerase A-like 4C (164 aa).

The PPIase cyclophilin-type domain maps to 7 to 163 (FFDITVDGKP…KKITIADCGQ (157 aa)).

The protein belongs to the cyclophilin-type PPIase family. PPIase A subfamily.

The protein localises to the cytoplasm. It carries out the reaction [protein]-peptidylproline (omega=180) = [protein]-peptidylproline (omega=0). Its function is as follows. PPIases accelerate the folding of proteins. It catalyzes the cis-trans isomerization of proline imidic peptide bonds in oligopeptides. This Homo sapiens (Human) protein is Peptidyl-prolyl cis-trans isomerase A-like 4C.